Here is a 299-residue protein sequence, read N- to C-terminus: MRDRLNEFQSRVTDRFDEVELSPARPPSAAEYVDRRFEEVRNAIASVRGEIEKLRRDQQHVLALTIADPRDKNILENQIGTIRRRTGDLRKLVRQAEDDFLEFTKQVQSVTEKRMRQNQLELLKDNLNKLINLFNETHQDYKSRVSVRVRRQLQTVGQDLTDEDINRIMENSGSEQLFFREVNPLSVSGQAAYEDVKKRHGEIKDLENNIAMLEEIFLDLQHLTEAQDEMVTNIDNNVENGLEQVKQGSANVKTAVEYKKSAMRKKICVAAILITILLILIIVAIILAVVLSRGNNNNK.

Residues 1–270 (MRDRLNEFQS…SAMRKKICVA (270 aa)) are Cytoplasmic-facing. A coiled-coil region spans residues 112–146 (EKRMRQNQLELLKDNLNKLINLFNETHQDYKSRVS). In terms of domain architecture, t-SNARE coiled-coil homology spans 193-255 (YEDVKKRHGE…KQGSANVKTA (63 aa)). A helical; Anchor for type IV membrane protein membrane pass occupies residues 271–291 (AILITILLILIIVAIILAVVL). Over 292–299 (SRGNNNNK) the chain is Extracellular.

Belongs to the syntaxin family.

It is found in the membrane. In terms of biological role, potentially involved in docking of synaptic vesicles at presynaptic active zones. The polypeptide is Putative syntaxin-2 (syx-2) (Caenorhabditis elegans).